The following is a 338-amino-acid chain: Lipoate-protein ligase A (338 aa).

The BPL/LPL catalytic domain maps to Pro-29–Val-216. ATP contacts are provided by residues Arg-71, Gly-76 to Phe-79, and Lys-134. Lys-134 is a binding site for (R)-lipoate.

It belongs to the LplA family. In terms of assembly, monomer.

It is found in the cytoplasm. It carries out the reaction L-lysyl-[lipoyl-carrier protein] + (R)-lipoate + ATP = N(6)-[(R)-lipoyl]-L-lysyl-[lipoyl-carrier protein] + AMP + diphosphate + H(+). Its pathway is protein modification; protein lipoylation via exogenous pathway; protein N(6)-(lipoyl)lysine from lipoate: step 1/2. It participates in protein modification; protein lipoylation via exogenous pathway; protein N(6)-(lipoyl)lysine from lipoate: step 2/2. Its function is as follows. Catalyzes both the ATP-dependent activation of exogenously supplied lipoate to lipoyl-AMP and the transfer of the activated lipoyl onto the lipoyl domains of lipoate-dependent enzymes. This is Lipoate-protein ligase A from Shigella boydii serotype 18 (strain CDC 3083-94 / BS512).